The primary structure comprises 128 residues: Small ribosomal subunit protein uS11 (128 aa).

This sequence belongs to the universal ribosomal protein uS11 family. In terms of assembly, part of the 30S ribosomal subunit. Interacts with proteins S7 and S18. Binds to IF-3.

In terms of biological role, located on the platform of the 30S subunit, it bridges several disparate RNA helices of the 16S rRNA. Forms part of the Shine-Dalgarno cleft in the 70S ribosome. The protein is Small ribosomal subunit protein uS11 of Aster yellows witches'-broom phytoplasma (strain AYWB).